Consider the following 353-residue polypeptide: rRNA methyltransferase 1, mitochondrial (353 aa).

The N-terminal 20 residues, 1-20 (MALLSTVRGATWGRLVTRHF), are a transit peptide targeting the mitochondrion. A disordered region spans residues 311–353 (PTEGERRQLLQDPQEPSARSEGLSMAQHPGLSSGPEKERQNEG).

Belongs to the class IV-like SAM-binding methyltransferase superfamily. RNA methyltransferase TrmH family.

It localises to the mitochondrion matrix. It carries out the reaction guanosine(1145) in 16S rRNA + S-adenosyl-L-methionine = 2'-O-methylguanosine(1145) in 16S rRNA + S-adenosyl-L-homocysteine + H(+). Functionally, S-adenosyl-L-methionine-dependent 2'-O-ribose methyltransferase that catalyzes the formation of 2'-O-methylguanosine at position 1145 (Gm1145) in the 16S mitochondrial large subunit ribosomal RNA (mtLSU rRNA), a universally conserved modification in the peptidyl transferase domain of the mtLSU rRNA. This Homo sapiens (Human) protein is rRNA methyltransferase 1, mitochondrial.